We begin with the raw amino-acid sequence, 1348 residues long: Phosphoribosylformylglycinamidine synthase (1348 aa).

ATP-binding positions include 300–311 and A701; that span reads GAATGAGGEIRD. Mg(2+)-binding residues include D702, E741, N745, and D941. S943 contacts ATP. The Glutamine amidotransferase type-1 domain occupies 1099 to 1348; it reads VAILREQGVN…MFRNARVWCG (250 aa). Residue C1192 is the Nucleophile of the active site. Residues H1313 and E1315 contribute to the active site.

The protein in the N-terminal section; belongs to the FGAMS family. Monomer.

Its subcellular location is the cytoplasm. It carries out the reaction N(2)-formyl-N(1)-(5-phospho-beta-D-ribosyl)glycinamide + L-glutamine + ATP + H2O = 2-formamido-N(1)-(5-O-phospho-beta-D-ribosyl)acetamidine + L-glutamate + ADP + phosphate + H(+). It participates in purine metabolism; IMP biosynthesis via de novo pathway; 5-amino-1-(5-phospho-D-ribosyl)imidazole from N(2)-formyl-N(1)-(5-phospho-D-ribosyl)glycinamide: step 1/2. Its function is as follows. Phosphoribosylformylglycinamidine synthase involved in the purines biosynthetic pathway. Catalyzes the ATP-dependent conversion of formylglycinamide ribonucleotide (FGAR) and glutamine to yield formylglycinamidine ribonucleotide (FGAM) and glutamate. The sequence is that of Phosphoribosylformylglycinamidine synthase from Xanthomonas axonopodis pv. citri (strain 306).